A 410-amino-acid polypeptide reads, in one-letter code: Lipid droplet-regulating VLDL assembly factor AUP1 (410 aa).

Met-1 carries the N-acetylmethionine modification. At 1–20 (MEPPPAPGPERLFDSHRLPS) the chain is on the cytoplasmic side. An intramembrane segment occupies 21 to 41 (DGFLLLALLLYAPVGLCLLVL). The Cytoplasmic segment spans residues 42–410 (RLFLGLHVFL…FRERQAQEAE (369 aa)). The disordered stretch occupies residues 259 to 293 (LTPADKAEHMKRQRHPRLRPQSVQSSFPSPPSPSS). Position 292 is a phosphoserine (Ser-292). Residues 296–338 (QLTILAQRVKEVLPHVPLNVIQRDLARTGCVDLTITNLLEGAV) enclose the CUE domain. The tract at residues 348 to 367 (GSQSLPTASAPKFPSSGLVT) is disordered. A Phosphoserine modification is found at Ser-363. Thr-367 carries the post-translational modification Phosphothreonine.

Belongs to the AUP1 family. As to quaternary structure, identified in a complex that contains SEL1L, OS9, FAF2/UBXD8, UBE2J1/UBC6E and AUP1. Interacts with the cytoplasmic tail of ITGA2B, ITGA1, ITGA2, ITGA5, ITGAV and ITGAM. Interacts (via C-terminus) with UBE2G2; the interaction recruits UBE2G2 to lipid droplets. Interacts with ubiquitin ligases AMFR/gp78 and RNF139/TRC8; this promotes interaction of UBE2G2 with AMFR and RNF139. Interacts with apolipoprotein APOB. Monoubiquitinated and diubiquitinated.

The protein resides in the endoplasmic reticulum membrane. It localises to the lipid droplet. In terms of biological role, plays a role in the translocation of terminally misfolded proteins from the endoplasmic reticulum lumen to the cytoplasm and their degradation by the proteasome. Plays a role in lipid droplet formation. Induces lipid droplet clustering. Recruits ubiquitin-conjugating enzyme UBE2G2 to lipid droplets which facilitates its interaction with ubiquitin ligases AMFR/gp78 and RNF139/TRC8, leading to sterol-induced ubiquitination of HMGCR and its subsequent proteasomal degradation. Also required for the degradation of INSIG1, SREBF1 and SREBF2. Plays a role in regulating assembly and secretion of very low density lipoprotein particles and stability of apolipoprotein APOB. The chain is Lipid droplet-regulating VLDL assembly factor AUP1 from Rattus norvegicus (Rat).